We begin with the raw amino-acid sequence, 590 residues long: Aspartate--tRNA(Asp/Asn) ligase (590 aa).

L-aspartate is bound at residue Glu-175. An aspartate region spans residues 199-202; sequence QQYK. L-aspartate contacts are provided by Arg-221 and His-450. 221-223 contacts ATP; it reads RDE. Glu-484 is an ATP binding site. Arg-491 lines the L-aspartate pocket. 536-539 contacts ATP; the sequence is GVDR.

The protein belongs to the class-II aminoacyl-tRNA synthetase family. Type 1 subfamily. In terms of assembly, homodimer.

It localises to the cytoplasm. The enzyme catalyses tRNA(Asx) + L-aspartate + ATP = L-aspartyl-tRNA(Asx) + AMP + diphosphate. Aspartyl-tRNA synthetase with relaxed tRNA specificity since it is able to aspartylate not only its cognate tRNA(Asp) but also tRNA(Asn). Reaction proceeds in two steps: L-aspartate is first activated by ATP to form Asp-AMP and then transferred to the acceptor end of tRNA(Asp/Asn). The sequence is that of Aspartate--tRNA(Asp/Asn) ligase from Rhodopseudomonas palustris (strain BisB18).